A 231-amino-acid chain; its full sequence is Nitrate reductase [NAD(P)H] (231 aa).

The FAD-binding FR-type domain maps to 1-85 (PQKLGLPVGR…KGPHRHIEYT (85 aa)). FAD-binding positions include 25-28 (RAYT), 42-46 (LIKIY), Phe-47, 59-61 (LMS), and Thr-112.

Belongs to the nitrate reductase family. Homodimer. FAD serves as cofactor. Heme is required as a cofactor. It depends on Mo-molybdopterin as a cofactor.

It catalyses the reaction nitrite + NAD(+) + H2O = nitrate + NADH + H(+). The catalysed reaction is nitrite + NADP(+) + H2O = nitrate + NADPH + H(+). Functionally, nitrate reductase is a key enzyme involved in the first step of nitrate assimilation in plants, fungi and bacteria. The chain is Nitrate reductase [NAD(P)H] (NAR) from Zea mays (Maize).